Reading from the N-terminus, the 1039-residue chain is uncharacterized protein (1039 aa).

Positions 1 to 28 (MKLFPRTLLKILVVSFILNFGVTSKSYA) are cleaved as a signal peptide. 6 helical membrane-spanning segments follow: residues 326–346 (IVTA…LLAG), 354–374 (YINF…LNIT), 387–407 (MIQW…SWVM), 491–511 (MLVS…AFMV), 517–537 (CMVS…MFLF), and 551–571 (MISF…MFSV). Positions 654–680 (KPNQTCDPKAADADTKCNPKPGDSSTS) are disordered. Residues 710–730 (IKDILLALVTACFTLYLMYNF) traverse the membrane as a helical segment. Disordered regions lie at residues 799–875 (LVKG…PTTV), 917–949 (IKEA…LDEN), and 1004–1039 (LYRS…DENP). Residues 802–811 (GSGGGGGSEG) are compositionally biased toward gly residues. Positions 812–836 (GDSFTSGGLRETSSTAATPSSALSS) are enriched in low complexity. A compositionally biased stretch (polar residues) spans 843 to 861 (GTATPSSASEEMLDTSFSN). Composition is skewed to basic and acidic residues over residues 917-939 (IKEA…HTTE) and 1004-1033 (LYRS…KIDS).

The protein belongs to the TrbL/VirB6 family.

It is found in the cell membrane. This is an uncharacterized protein from Rickettsia bellii (strain RML369-C).